Here is a 171-residue protein sequence, read N- to C-terminus: Cytochrome c-type biogenesis protein CcmE (171 aa).

Residues 1–7 (MNRKQKR) lie on the Cytoplasmic side of the membrane. The chain crosses the membrane as a helical; Signal-anchor for type II membrane protein span at residues 8-28 (LAVIAGGMGFIAAAVLLVMFA). Residues 29 to 171 (FSQSVAYFYM…NPGEEAKATQ (143 aa)) are Periplasmic-facing. Heme-binding residues include His124 and Tyr128. The tract at residues 132 to 171 (DVADRLKQQGLWKEGQGGQESPGKEGQGQENPGEEAKATQ) is disordered.

This sequence belongs to the CcmE/CycJ family.

Its subcellular location is the cell inner membrane. Heme chaperone required for the biogenesis of c-type cytochromes. Transiently binds heme delivered by CcmC and transfers the heme to apo-cytochromes in a process facilitated by CcmF and CcmH. The sequence is that of Cytochrome c-type biogenesis protein CcmE from Rhizobium leguminosarum bv. trifolii (strain WSM2304).